We begin with the raw amino-acid sequence, 601 residues long: NADH-quinone oxidoreductase subunit C/D (601 aa).

The interval 1–191 is NADH dehydrogenase I subunit C; that stretch reads MKLTRDFPHN…DPFMLDAAKQ (191 aa). The segment at 215 to 601 is NADH dehydrogenase I subunit D; the sequence is DYMFLNLGPN…IDFVMSDVDR (387 aa).

In the N-terminal section; belongs to the complex I 30 kDa subunit family. This sequence in the C-terminal section; belongs to the complex I 49 kDa subunit family. In terms of assembly, NDH-1 is composed of 13 different subunits. Subunits NuoB, CD, E, F, and G constitute the peripheral sector of the complex.

The protein localises to the cell inner membrane. The enzyme catalyses a quinone + NADH + 5 H(+)(in) = a quinol + NAD(+) + 4 H(+)(out). In terms of biological role, NDH-1 shuttles electrons from NADH, via FMN and iron-sulfur (Fe-S) centers, to quinones in the respiratory chain. The immediate electron acceptor for the enzyme in this species is believed to be ubiquinone. Couples the redox reaction to proton translocation (for every two electrons transferred, four hydrogen ions are translocated across the cytoplasmic membrane), and thus conserves the redox energy in a proton gradient. This is NADH-quinone oxidoreductase subunit C/D from Shewanella oneidensis (strain ATCC 700550 / JCM 31522 / CIP 106686 / LMG 19005 / NCIMB 14063 / MR-1).